We begin with the raw amino-acid sequence, 396 residues long: Elongation factor Tu (396 aa).

One can recognise a tr-type G domain in the interval 11–205 (KPHVNIGTIG…VIDDYIPTPK (195 aa)). The G1 stretch occupies residues 20 to 27 (GHVDHGKT). 20–27 (GHVDHGKT) lines the GTP pocket. Residue Thr27 participates in Mg(2+) binding. The G2 stretch occupies residues 61 to 65 (GITIN). Residues 82–85 (DAPG) form a G3 region. Residues 82–86 (DAPGH) and 137–140 (NKTD) contribute to the GTP site. Residues 137 to 140 (NKTD) form a G4 region. The interval 175 to 177 (SAL) is G5.

Belongs to the TRAFAC class translation factor GTPase superfamily. Classic translation factor GTPase family. EF-Tu/EF-1A subfamily. Monomer.

Its subcellular location is the cytoplasm. The catalysed reaction is GTP + H2O = GDP + phosphate + H(+). Functionally, GTP hydrolase that promotes the GTP-dependent binding of aminoacyl-tRNA to the A-site of ribosomes during protein biosynthesis. In Limosilactobacillus reuteri (strain DSM 20016) (Lactobacillus reuteri), this protein is Elongation factor Tu.